The chain runs to 721 residues: Mitogen-activated protein kinase 6 (721 aa).

A Peptide (Met-Gly) (interchain with G-Cter in ubiquitin) cross-link involves residue Met1. Residues 20–316 (YMDLKPLGCG…AEEALSHPYM (297 aa)) enclose the Protein kinase domain. ATP contacts are provided by residues 26-34 (LGCGGNGLV) and Lys49. Residue Asp152 is the Proton acceptor of the active site. Ser189 bears the Phosphoserine; by PAK1, PAK2 and PAK3 mark. The SEG motif motif lies at 189–191 (SEG). The short motif at 332 to 337 (FHIEDE) is the FRIEDE motif element. 6 positions are modified to phosphoserine: Ser386, Ser452, Ser556, Ser558, Ser665, and Ser684. Over residues 701 to 715 (AMKSSPQIPHQTYSS) the composition is skewed to polar residues. Positions 701–721 (AMKSSPQIPHQTYSSILKHLN) are disordered.

Belongs to the protein kinase superfamily. CMGC Ser/Thr protein kinase family. MAP kinase subfamily. In terms of assembly, heterodimer with ERK4/MAPK4. Interacts with (via FRIEDE motif) MAPKAPK5. Interacts with UBE3A; this interaction may be indirect and mediated by HERC2, possibly via HERC2 interaction with NEURL4. Requires Mg(2+) as cofactor. Phosphorylated at Ser-189 by PAK1, PAK2 and PAK3 resulting in catalytic activation. Phosphorylated by MAPKAPK5 at other sites. In terms of processing, ubiquitination at Met-1 leads to degradation by the proteasome pathway.

It localises to the cytoplasm. The protein resides in the nucleus. It catalyses the reaction L-seryl-[protein] + ATP = O-phospho-L-seryl-[protein] + ADP + H(+). It carries out the reaction L-threonyl-[protein] + ATP = O-phospho-L-threonyl-[protein] + ADP + H(+). Activated by phosphorylation at Ser-189. Its function is as follows. Atypical MAPK protein. Phosphorylates microtubule-associated protein 2 (MAP2) and MAPKAPK5. The precise role of the complex formed with MAPKAPK5 is still unclear, but the complex follows a complex set of phosphorylation events: upon interaction with atypical MAPKAPK5, ERK3/MAPK6 is phosphorylated at Ser-189 and then mediates phosphorylation and activation of MAPKAPK5, which in turn phosphorylates ERK3/MAPK6. May promote entry in the cell cycle. The polypeptide is Mitogen-activated protein kinase 6 (MAPK6) (Pongo abelii (Sumatran orangutan)).